Consider the following 380-residue polypeptide: Probable transposase for insertion sequence element IS701 (380 aa).

Involved in the transposition of the insertion sequence. The protein is Probable transposase for insertion sequence element IS701 of Microchaete diplosiphon (Fremyella diplosiphon).